A 221-amino-acid polypeptide reads, in one-letter code: MKPLIVLNLKTYLEGTGEGAVRIARACKEVGEASGIEIAIAPQFCDIYRVASQVDVPVYSQHLDGVGAGSFTGHAFAKCIKDAGAVGTLINHSECRLKLADIEASVTAAKGEGLRTIICTNNIATTAAAAALGPDYVAVEPPELIGSGIPVSKADPEVVTGSVAAVERIDPAVKVLCGAGISKGEDLKAAIELGSVGVLLASGIVKAKDPKAALEDLVSLI.

Position 8–10 (8–10 (NLK)) interacts with substrate. The active-site Electrophile is His92. The Proton acceptor role is filled by Glu140. Residues Ile145, Gly180, and 201 to 202 (AS) each bind substrate.

Belongs to the triosephosphate isomerase family. Homotetramer; dimer of dimers.

It is found in the cytoplasm. The catalysed reaction is D-glyceraldehyde 3-phosphate = dihydroxyacetone phosphate. Its pathway is carbohydrate biosynthesis; gluconeogenesis. It participates in carbohydrate degradation; glycolysis; D-glyceraldehyde 3-phosphate from glycerone phosphate: step 1/1. Functionally, involved in the gluconeogenesis. Catalyzes stereospecifically the conversion of dihydroxyacetone phosphate (DHAP) to D-glyceraldehyde-3-phosphate (G3P). The sequence is that of Triosephosphate isomerase from Methanococcoides burtonii (strain DSM 6242 / NBRC 107633 / OCM 468 / ACE-M).